Consider the following 73-residue polypeptide: Homeodomain-only protein (73 aa).

The homeobox; degenerate DNA-binding region spans 3–62; the sequence is TETASGPTEDQVEILEYNFNKVNKHPDPTTLCLIAAEAGLSEEETQKWFKQRLAQWRRSE.

Interacts with serum response factor (SRF). Component of a large complex containing histone deacetylases such as HDAC2. Interacts with the acetylated forms of HSPA1A and HSPA1B. Interacts with HSPA8.

The protein localises to the nucleus. It is found in the cytoplasm. Its function is as follows. Atypical homeodomain protein which does not bind DNA and is required to modulate cardiac growth and development. Acts via its interaction with SRF, thereby modulating the expression of SRF-dependent cardiac-specific genes and cardiac development. Prevents SRF-dependent transcription either by inhibiting SRF binding to DNA or by recruiting histone deacetylase (HDAC) proteins that prevent transcription by SRF. Overexpression causes cardiac hypertrophy. Acts as a co-chaperone for HSPA1A and HSPA1B chaperone proteins and assists in chaperone-mediated protein refolding. This Bos taurus (Bovine) protein is Homeodomain-only protein (HOPX).